The following is a 147-amino-acid chain: Hemoglobin subunit epsilon (147 aa).

Residues 3-147 form the Globin domain; that stretch reads HFTAEEKAAI…VAIALGHKYH (145 aa). Residues serine 14 and serine 51 each carry the phosphoserine modification. Residues histidine 64 and histidine 93 each contribute to the heme b site.

It belongs to the globin family. In terms of assembly, heterotetramer of two alpha chains and two epsilon chains in early embryonic hemoglobin Gower-2; two zeta chains and two epsilon chains in early embryonic hemoglobin Gower-1. As to expression, red blood cells.

Functionally, the epsilon chain is a beta-type chain of early mammalian embryonic hemoglobin. The protein is Hemoglobin subunit epsilon (HBE1) of Callithrix jacchus (White-tufted-ear marmoset).